We begin with the raw amino-acid sequence, 465 residues long: 2-methylcitrate synthase, mitochondrial (465 aa).

Residues 1 to 29 (MAMTMRSTRHASKLAQTARLALTNSRRYS) constitute a mitochondrion transit peptide. 2 residues coordinate CoA: Arg74 and Lys192. His269 contributes to the oxaloacetate binding site. Leu304 is a binding site for CoA. His305 is a catalytic residue. Val346, Gly348, and Tyr349 together coordinate CoA. Residues His351 and Arg360 each contribute to the oxaloacetate site. The active site involves His351. The CoA site is built by Thr400, Lys401, and Asn406. Asp408 is a catalytic residue. Residues Arg434 and Arg454 each contribute to the oxaloacetate site.

It belongs to the citrate synthase family. Homodimer.

It is found in the mitochondrion matrix. The catalysed reaction is propanoyl-CoA + oxaloacetate + H2O = (2S,3S)-2-methylcitrate + CoA + H(+). It catalyses the reaction oxaloacetate + acetyl-CoA + H2O = citrate + CoA + H(+). It participates in organic acid metabolism; propanoate degradation. Functionally, component of the methylcitrate cycle that catalyzes the synthesis of (2S,3S)-2-methylcitrate from propionyl-CoA and oxaloacetate. Plays an important role in detoxification of propionyl-CoA, an inhibitor of both primary and secondary metabolism. Also has citrate synthase activity using as substrates acetyl-CoA and oxaloacetate. Plays a key role in the estabishment of invasive pulmonary aspergillosis. The sequence is that of 2-methylcitrate synthase, mitochondrial from Aspergillus fumigatus (strain CBS 144.89 / FGSC A1163 / CEA10) (Neosartorya fumigata).